Consider the following 246-residue polypeptide: Probable septum site-determining protein MinC (246 aa).

Belongs to the MinC family. In terms of assembly, interacts with MinD and FtsZ.

Its function is as follows. Cell division inhibitor that blocks the formation of polar Z ring septums. Rapidly oscillates between the poles of the cell to destabilize FtsZ filaments that have formed before they mature into polar Z rings. Prevents FtsZ polymerization. In Pseudomonas syringae pv. syringae (strain B728a), this protein is Probable septum site-determining protein MinC.